The sequence spans 451 residues: Protein tweety homolog 1-B (451 aa).

Residues 1–43 (MSTSHGYRASWWTYILHQVPHTNFQFEVVDNQFAPQEWSYQQA) lie on the Extracellular side of the membrane. Residues 44 to 64 (LLFLASIAGLCLAISLVLICV) form a helical membrane-spanning segment. Over 65-86 (YLIKFCCCASQEDDDSKSHRVC) the chain is Cytoplasmic. A helical transmembrane segment spans residues 87-107 (CVTWSCVAAVIICCAGIGIGF). Topologically, residues 108–214 (YGNSETNDGV…QVNFIEDYRW (107 aa)) are extracellular. Asparagine 128 is a glycosylation site (N-linked (GlcNAc...) asparagine). A helical membrane pass occupies residues 215–235 (LAYILLLLLDLIICLFTLLSL). Residues 236 to 240 (AKQIK) lie on the Cytoplasmic side of the membrane. A helical transmembrane segment spans residues 241–261 (WLVIVMTVVSFFVLLLSWGSM). The Extracellular portion of the chain corresponds to 262-390 (GLEMATAVGL…LKGLCYDGME (129 aa)). Disulfide bonds link cysteine 275–cysteine 385 and cysteine 303–cysteine 370. Residues asparagine 284 and asparagine 355 are each glycosylated (N-linked (GlcNAc...) asparagine). The helical transmembrane segment at 391–411 (GILFLLLFSFLSALSFTAAVC) threads the bilayer. Residues 412–451 (SLPRAWKRFRNRDLDYDDMDEDDPFNPQESKRFVQWQSSI) are Cytoplasmic-facing.

The protein belongs to the tweety family. Homotetramer; disulfide-linked. Homodimer.

The protein resides in the cell membrane. The catalysed reaction is chloride(in) = chloride(out). The enzyme catalyses L-glutamate(out) = L-glutamate(in). May act as a calcium-independent, swelling-dependent volume-regulated anion channel (VRAC-swell) which plays a pivotal role in the process of regulatory volume decrease (RVD) in the brain through the efflux of anions like chloride and organic osmolytes like glutamate. This chain is Protein tweety homolog 1-B (ttyh1-b), found in Xenopus laevis (African clawed frog).